The chain runs to 133 residues: S-adenosylmethionine decarboxylase proenzyme (133 aa).

Ser-65 functions as the Schiff-base intermediate with substrate; via pyruvic acid in the catalytic mechanism. Ser-65 carries the pyruvic acid (Ser); by autocatalysis modification. Catalysis depends on His-70, which acts as the Proton acceptor; for processing activity. Cys-85 acts as the Proton donor; for catalytic activity in catalysis.

The protein belongs to the prokaryotic AdoMetDC family. Type 1 subfamily. In terms of assembly, heterotetramer of two alpha and two beta chains arranged as a dimer of alpha/beta heterodimers. Requires pyruvate as cofactor. In terms of processing, is synthesized initially as an inactive proenzyme. Formation of the active enzyme involves a self-maturation process in which the active site pyruvoyl group is generated from an internal serine residue via an autocatalytic post-translational modification. Two non-identical subunits are generated from the proenzyme in this reaction, and the pyruvate is formed at the N-terminus of the alpha chain, which is derived from the carboxyl end of the proenzyme. The post-translation cleavage follows an unusual pathway, termed non-hydrolytic serinolysis, in which the side chain hydroxyl group of the serine supplies its oxygen atom to form the C-terminus of the beta chain, while the remainder of the serine residue undergoes an oxidative deamination to produce ammonia and the pyruvoyl group blocking the N-terminus of the alpha chain.

It catalyses the reaction S-adenosyl-L-methionine + H(+) = S-adenosyl 3-(methylsulfanyl)propylamine + CO2. It functions in the pathway amine and polyamine biosynthesis; S-adenosylmethioninamine biosynthesis; S-adenosylmethioninamine from S-adenosyl-L-methionine: step 1/1. In terms of biological role, catalyzes the decarboxylation of S-adenosylmethionine to S-adenosylmethioninamine (dcAdoMet), the propylamine donor required for the synthesis of the polyamines spermine and spermidine from the diamine putrescine. This Brevibacillus brevis (strain 47 / JCM 6285 / NBRC 100599) protein is S-adenosylmethionine decarboxylase proenzyme.